The chain runs to 378 residues: Small RNA 2'-O-methyltransferase (378 aa).

Position 61 (Asp-61) interacts with S-adenosyl-L-methionine. Residues Glu-114, Glu-117, His-118, and His-176 each coordinate Mg(2+).

Belongs to the methyltransferase superfamily. HEN1 family. Mg(2+) is required as a cofactor.

The protein localises to the cytoplasm. It carries out the reaction small RNA 3'-end nucleotide + S-adenosyl-L-methionine = small RNA 3'-end 2'-O-methylnucleotide + S-adenosyl-L-homocysteine + H(+). In terms of biological role, methyltransferase that adds a 2'-O-methyl group at the 3'-end of small RNAs. The chain is Small RNA 2'-O-methyltransferase from Schizosaccharomyces pombe (strain 972 / ATCC 24843) (Fission yeast).